The sequence spans 468 residues: Nuclear receptor ROR-alpha A (468 aa).

Residues isoleucine 15 to phenylalanine 90 constitute a DNA-binding region (nuclear receptor). 2 consecutive NR C4-type zinc fingers follow at residues cysteine 18–cysteine 38 and cysteine 54–cysteine 73. 2 disordered regions span residues leucine 101–proline 129 and histidine 142–valine 163. One can recognise an NR LBD domain in the interval glutamate 217 to leucine 455. Positions valine 444–leucine 455 are AF-2.

It belongs to the nuclear hormone receptor family. NR1 subfamily. As to expression, expressed in the brain, in cerebellar-like structures, including Purkinje cells.

The protein resides in the nucleus. In terms of biological role, nuclear receptor that binds DNA as a monomer to ROR response elements (RORE). Required for proper cerebellum development. In Danio rerio (Zebrafish), this protein is Nuclear receptor ROR-alpha A (roraa).